The following is a 200-amino-acid chain: Small ribosomal subunit protein uS4 (200 aa).

The interval 22–43 (TGKELERRPYAPGQHGPTQRKK) is disordered. The S4 RNA-binding domain maps to 92–170 (QRLDNIVYRL…VPEYVTFDAE (79 aa)).

It belongs to the universal ribosomal protein uS4 family. As to quaternary structure, part of the 30S ribosomal subunit. Contacts protein S5. The interaction surface between S4 and S5 is involved in control of translational fidelity.

In terms of biological role, one of the primary rRNA binding proteins, it binds directly to 16S rRNA where it nucleates assembly of the body of the 30S subunit. Its function is as follows. With S5 and S12 plays an important role in translational accuracy. In Listeria monocytogenes serotype 4b (strain F2365), this protein is Small ribosomal subunit protein uS4.